Here is a 176-residue protein sequence, read N- to C-terminus: Cytochrome b (176 aa).

3 helical membrane-spanning segments follow: residues 33–53, 77–98, and 113–133; these read FGSLLGVCLTMQIMTGLFLAM, WLLRYLHANGASMFFICLYLHI, and WNVGIILLFAVMATAFMGYVL. Heme b contacts are provided by His-83 and His-97.

The protein belongs to the cytochrome b family. The cytochrome bc1 complex contains 11 subunits: 3 respiratory subunits (MT-CYB, CYC1 and UQCRFS1), 2 core proteins (UQCRC1 and UQCRC2) and 6 low-molecular weight proteins (UQCRH/QCR6, UQCRB/QCR7, UQCRQ/QCR8, UQCR10/QCR9, UQCR11/QCR10 and a cleavage product of UQCRFS1). This cytochrome bc1 complex then forms a dimer. Requires heme b as cofactor.

The protein localises to the mitochondrion inner membrane. Functionally, component of the ubiquinol-cytochrome c reductase complex (complex III or cytochrome b-c1 complex) that is part of the mitochondrial respiratory chain. The b-c1 complex mediates electron transfer from ubiquinol to cytochrome c. Contributes to the generation of a proton gradient across the mitochondrial membrane that is then used for ATP synthesis. The chain is Cytochrome b (MT-CYB) from Eumops perotis (Western bonneted bat).